Here is a 39-residue protein sequence, read N- to C-terminus: Large ribosomal subunit protein bL36 (39 aa).

It belongs to the bacterial ribosomal protein bL36 family.

The polypeptide is Large ribosomal subunit protein bL36 (Limosilactobacillus reuteri (strain DSM 20016) (Lactobacillus reuteri)).